The following is a 653-amino-acid chain: DNA-directed RNA polymerase III subunit RPC-3 (653 aa).

3 disordered regions span residues 141-186 (INGV…DSDP), 280-309 (DSSA…DFSD), and 422-442 (IKED…KRRG). The span at 159 to 170 (AENHTDHAHDYQ) shows a compositional bias: basic and acidic residues. Composition is skewed to acidic residues over residues 293-309 (PLED…DFSD) and 424-433 (EDEDDEDEEG). The tract at residues 580–601 (TYKSMSRCLQRIRVEREKLKFL) is leucine-zipper.

The protein belongs to the RNA polymerase beta chain family. In terms of assembly, component of the RNA polymerase III (Pol III) complex consisting of 17 subunits.

It is found in the nucleus. Functionally, DNA-dependent RNA polymerase catalyzes the transcription of DNA into RNA using the four ribonucleoside triphosphates as substrates. Specific core component of RNA polymerase III which synthesizes small RNAs, such as 5S rRNA and tRNAs. The chain is DNA-directed RNA polymerase III subunit RPC-3 (RPC-82) from Coccidioides immitis (strain RS) (Valley fever fungus).